A 225-amino-acid chain; its full sequence is ATP synthase subunit a (225 aa).

A run of 5 helical transmembrane segments spans residues 16-36 (LFVY…VAKL), 79-99 (LVAT…IPGF), 105-125 (SLNL…FEGI), 176-196 (LFLL…AYAL), and 202-222 (VLQT…AVAI).

Belongs to the ATPase A chain family. F-type ATPases have 2 components, CF(1) - the catalytic core - and CF(0) - the membrane proton channel. CF(1) has five subunits: alpha(3), beta(3), gamma(1), delta(1), epsilon(1). CF(0) has three main subunits: a(1), b(2) and c(9-12). The alpha and beta chains form an alternating ring which encloses part of the gamma chain. CF(1) is attached to CF(0) by a central stalk formed by the gamma and epsilon chains, while a peripheral stalk is formed by the delta and b chains.

It localises to the cell inner membrane. Its function is as follows. Key component of the proton channel; it plays a direct role in the translocation of protons across the membrane. This chain is ATP synthase subunit a, found in Campylobacter curvus (strain 525.92).